A 387-amino-acid chain; its full sequence is Fructose-1,6-bisphosphate aldolase/phosphatase (387 aa).

Asp13 (proton acceptor; for FBP phosphatase activity) is an active-site residue. Mg(2+) contacts are provided by Asp13, His20, Asp54, and Asp55. Residue His20 participates in beta-D-fructose 1,6-bisphosphate binding. His20 contributes to the dihydroxyacetone phosphate binding site. Residue Tyr92 participates in beta-D-fructose 1,6-bisphosphate binding. A Mg(2+)-binding site is contributed by Gln96. 105–106 is a binding site for beta-D-fructose 1,6-bisphosphate; it reads GN. A Mg(2+)-binding site is contributed by Asp133. Lys134 contacts beta-D-fructose 1,6-bisphosphate. Lys134 is a dihydroxyacetone phosphate binding site. The active-site Proton donor/acceptor; for FBP aldolase activity is the Tyr229. Mg(2+) is bound by residues Lys232, Asp233, and Asp234. The active-site Schiff-base intermediate with DHAP; for FBP aldolase activity is Lys232. Beta-D-fructose 1,6-bisphosphate is bound by residues 242-243, Arg266, Asp287, and Tyr348; that span reads QS. Residues Arg266 and Asp287 each coordinate dihydroxyacetone phosphate.

This sequence belongs to the FBP aldolase/phosphatase family. Homooctamer; dimer of tetramers. The cofactor is Mg(2+).

It carries out the reaction beta-D-fructose 1,6-bisphosphate + H2O = beta-D-fructose 6-phosphate + phosphate. It catalyses the reaction beta-D-fructose 1,6-bisphosphate = D-glyceraldehyde 3-phosphate + dihydroxyacetone phosphate. It participates in carbohydrate biosynthesis; gluconeogenesis. Functionally, catalyzes two subsequent steps in gluconeogenesis: the aldol condensation of dihydroxyacetone phosphate (DHAP) and glyceraldehyde-3-phosphate (GA3P) to fructose-1,6-bisphosphate (FBP), and the dephosphorylation of FBP to fructose-6-phosphate (F6P). The chain is Fructose-1,6-bisphosphate aldolase/phosphatase from Ignicoccus hospitalis (strain KIN4/I / DSM 18386 / JCM 14125).